A 137-amino-acid chain; its full sequence is Probable 4-amino-4-deoxy-L-arabinose-phosphoundecaprenol flippase subunit ArnF (137 aa).

The Cytoplasmic portion of the chain corresponds to 1–3; that stretch reads MNA. The chain crosses the membrane as a helical span at residues 4 to 24; it reads LRGWLAALGSVLLASAAQLGM. The Periplasmic portion of the chain corresponds to 25–44; it reads RWGMSRLPLPEAWAGQTPER. A helical transmembrane segment spans residues 45-65; that stretch reads AALLAVALAVAAYAASLLCWL. Residues 66 to 76 are Cytoplasmic-facing; it reads AALRHLPLGRA. A helical membrane pass occupies residues 77-97; the sequence is YSLLSASYALVYLLAASLPAF. Residues 98–100 lie on the Periplasmic side of the membrane; that stretch reads DET. The helical transmembrane segment at 101 to 121 threads the bilayer; it reads FSTSKTLGVGLVVLGVLTVNA. Residues 122–137 are Cytoplasmic-facing; the sequence is RRTAAAPAHHPSRKAP.

This sequence belongs to the ArnF family. Heterodimer of ArnE and ArnF.

Its subcellular location is the cell inner membrane. The protein operates within bacterial outer membrane biogenesis; lipopolysaccharide biosynthesis. Functionally, translocates 4-amino-4-deoxy-L-arabinose-phosphoundecaprenol (alpha-L-Ara4N-phosphoundecaprenol) from the cytoplasmic to the periplasmic side of the inner membrane. The chain is Probable 4-amino-4-deoxy-L-arabinose-phosphoundecaprenol flippase subunit ArnF from Pseudomonas aeruginosa (strain ATCC 15692 / DSM 22644 / CIP 104116 / JCM 14847 / LMG 12228 / 1C / PRS 101 / PAO1).